Reading from the N-terminus, the 75-residue chain is Small ribosomal subunit protein bS18c (75 aa).

This sequence belongs to the bacterial ribosomal protein bS18 family. Part of the 30S ribosomal subunit.

It localises to the plastid. It is found in the chloroplast. This Anthoceros angustus (Hornwort) protein is Small ribosomal subunit protein bS18c (rps18).